The primary structure comprises 294 residues: tRNA dimethylallyltransferase (294 aa).

10 to 17 contacts ATP; that stretch reads GPTAVGKT. 12–17 is a substrate binding site; the sequence is TAVGKT. The segment at 35–38 is interaction with substrate tRNA; it reads DSQQ.

The protein belongs to the IPP transferase family. As to quaternary structure, monomer. The cofactor is Mg(2+).

The catalysed reaction is adenosine(37) in tRNA + dimethylallyl diphosphate = N(6)-dimethylallyladenosine(37) in tRNA + diphosphate. In terms of biological role, catalyzes the transfer of a dimethylallyl group onto the adenine at position 37 in tRNAs that read codons beginning with uridine, leading to the formation of N6-(dimethylallyl)adenosine (i(6)A). In Streptococcus pneumoniae (strain Hungary19A-6), this protein is tRNA dimethylallyltransferase.